The following is a 314-amino-acid chain: 2-dehydro-3-deoxygluconokinase (314 aa).

Substrate is bound by residues 28-32, tyrosine 88, 102-104, and arginine 170; these read GDTLN and YWR. ATP contacts are provided by residues 168–170, 228–233, and 260–263; these read NYR, KCGKNG, and SAGD. Residue aspartate 263 coordinates substrate. Catalysis depends on aspartate 263, which acts as the Proton acceptor.

Belongs to the carbohydrate kinase PfkB family.

The enzyme catalyses 2-dehydro-3-deoxy-D-gluconate + ATP = 2-dehydro-3-deoxy-6-phospho-D-gluconate + ADP + H(+). Its pathway is carbohydrate acid metabolism; 2-dehydro-3-deoxy-D-gluconate degradation; D-glyceraldehyde 3-phosphate and pyruvate from 2-dehydro-3-deoxy-D-gluconate: step 1/2. Functionally, catalyzes the phosphorylation of 2-keto-3-deoxygluconate (KDG) to produce 2-keto-3-deoxy-6-phosphogluconate (KDPG). The sequence is that of 2-dehydro-3-deoxygluconokinase (kdgK) from Haemophilus influenzae (strain ATCC 51907 / DSM 11121 / KW20 / Rd).